A 161-amino-acid chain; its full sequence is Protein-export protein SecB (161 aa).

The tract at residues 141 to 161 is disordered; that stretch reads KKQQETAGEQPDQPADTITRH.

It belongs to the SecB family. In terms of assembly, homotetramer, a dimer of dimers. One homotetramer interacts with 1 SecA dimer.

The protein localises to the cytoplasm. One of the proteins required for the normal export of preproteins out of the cell cytoplasm. It is a molecular chaperone that binds to a subset of precursor proteins, maintaining them in a translocation-competent state. It also specifically binds to its receptor SecA. In Nitrosomonas europaea (strain ATCC 19718 / CIP 103999 / KCTC 2705 / NBRC 14298), this protein is Protein-export protein SecB.